A 168-amino-acid chain; its full sequence is Protein B-Myc (168 aa).

2 disordered regions span residues 26 to 94 (DDEE…DLPE) and 146 to 168 (EGASVSPAADVEPATPPDCTCNT). Phosphoserine is present on residues serine 59 and serine 67.

It localises to the nucleus. Functionally, seems to act as an inhibitor of cellular proliferation. The chain is Protein B-Myc (Mycb) from Rattus norvegicus (Rat).